A 129-amino-acid chain; its full sequence is uncharacterized protein (129 aa).

This is an uncharacterized protein from Streptococcus pyogenes serotype M6 (strain ATCC BAA-946 / MGAS10394).